The following is a 695-amino-acid chain: Threonine--tRNA ligase (695 aa).

One can recognise a TGS domain in the interval 1 to 76; sequence MPRIPSPPQA…TTTDVVEPVT (76 aa). A catalytic region spans residues 279-585; that stretch reads DHRKLGVELD…LLEHHAGAFP (307 aa). Positions 384, 435, and 562 each coordinate Zn(2+).

It belongs to the class-II aminoacyl-tRNA synthetase family. In terms of assembly, homodimer. Zn(2+) is required as a cofactor.

The protein resides in the cytoplasm. It catalyses the reaction tRNA(Thr) + L-threonine + ATP = L-threonyl-tRNA(Thr) + AMP + diphosphate + H(+). Catalyzes the attachment of threonine to tRNA(Thr) in a two-step reaction: L-threonine is first activated by ATP to form Thr-AMP and then transferred to the acceptor end of tRNA(Thr). Also edits incorrectly charged L-seryl-tRNA(Thr). In Leifsonia xyli subsp. xyli (strain CTCB07), this protein is Threonine--tRNA ligase.